Reading from the N-terminus, the 383-residue chain is tRNA pseudouridine synthase B (383 aa).

Asp53 functions as the Nucleophile in the catalytic mechanism.

Belongs to the pseudouridine synthase TruB family. Type 1 subfamily.

It carries out the reaction uridine(55) in tRNA = pseudouridine(55) in tRNA. Functionally, responsible for synthesis of pseudouridine from uracil-55 in the psi GC loop of transfer RNAs. In Tropheryma whipplei (strain TW08/27) (Whipple's bacillus), this protein is tRNA pseudouridine synthase B.